We begin with the raw amino-acid sequence, 134 residues long: Interleukin-5 (134 aa).

A signal peptide spans 1–19; the sequence is MRMLLHLSLLALGASYMYA. O-linked (GalNAc...) threonine glycosylation is present at Thr22. 2 N-linked (GlcNAc...) asparagine glycosylation sites follow: Asn47 and Asn90.

This sequence belongs to the IL-5 family. Homodimer; disulfide-linked. Interacts with IL5RA. Interacts with CSF2RB.

It localises to the secreted. Homodimeric cytokine expressed predominantly by T-lymphocytes and NK cells that plays an important role in the survival, differentiation, and chemotaxis of eosinophils. Also acts on activated and resting B-cells to induce immunoglobulin production, growth, and differentiation. Mechanistically, exerts its biological effects through a receptor composed of IL5RA subunit and the cytokine receptor common subunit beta/CSF2RB. Binding to the receptor leads to activation of various kinases including LYN, SYK and JAK2 and thereby propagates signals through the RAS-MAPK and JAK-STAT5 pathways respectively. This Cercocebus atys (Sooty mangabey) protein is Interleukin-5 (IL5).